The chain runs to 475 residues: MINNQTNKKGPQLERVHFGSTQVVGKSTKRRQRGTKLDIEYTVRRNDAPKEQKFLISEIFDEKLDKQIKHEKKQNHTFIKPKLSLVIKEEQHITKKVLRGKERAATHAFMKEMVESNKIQPSWNVEYEKEIDEVDLFFMKKKTKPFSGFSIKELRDSLIVQSDDKNMAQPTVMSSIDEIVTPREEISVSAISEQLASLMERVDKLEKMNAALEEENKQLKKEREATIKSVKKEAKKIKQEKPQIVKKTQHKSLGVNLKITKTKVVGQEQCLEIENTQHKKFVEKPSMPLKVSKKMTEHQLKKTIRTWYEFDPSKLVQHQKEVLNSVVTNTTFADKVRETGIPKQKIRYVAKPPAEEKRSIHFYGYKPKGIPNKVWWNWVTTGTAMDAYEKADRYLYHQFKREMMIYRNKWVKFSKEFNPYLSKPKMVWEENTWEYEYKTDVPYNFILKWRQLVQTYKPNTPIQADWYKISQKQQC.

A coiled-coil region spans residues 185–244 (EISVSAISEQLASLMERVDKLEKMNAALEEENKQLKKEREATIKSVKKEAKKIKQEKPQI).

This is an uncharacterized protein from Nora virus.